The chain runs to 1216 residues: 1-phosphatidylinositol 4,5-bisphosphate phosphodiesterase beta-1 (1216 aa).

C17 carries S-palmitoyl cysteine lipidation. The residue at position 236 (S236) is a Phosphoserine. In terms of domain architecture, PI-PLC X-box spans 316 to 467 (EDMSQPLSHY…LMYKILVKNK (152 aa)). Residues H331 and H378 contribute to the active site. Phosphoserine is present on S417. A disordered region spans residues 469-534 (KSHKSSEGSG…MDEGTAGSEA (66 aa)). Positions 472–483 (KSSEGSGKKKLS) are enriched in basic and acidic residues. Over residues 491 to 501 (SDSSSVFEPSS) the composition is skewed to low complexity. The span at 507–518 (ADTESDDDDDDD) shows a compositional bias: acidic residues. Position 509 is a phosphothreonine (T509). Phosphoserine occurs at positions 511 and 582. A PI-PLC Y-box domain is found at 540–656 (MSNLVNYIQP…GYRLKPEFMR (117 aa)). One can recognise a C2 domain in the interval 656–786 (RRPDKHFDPF…RNERNQPLTL (131 aa)). Disordered regions lie at residues 834-891 (DEEE…VKAP), 967-989 (EKSAKKDSKKKSEPSSPDHGSSA), 1072-1095 (MDKKRQEKITEAKSKDKSQMEEEK), and 1173-1216 (ISED…DTPL). The span at 846–868 (ETSSEAPSETRTTPAENGVNHTA) shows a compositional bias: polar residues. Position 887 is a phosphoserine; by PKC (S887). The segment covering 967–979 (EKSAKKDSKKKSE) has biased composition (basic and acidic residues). Residues S978 and S987 each carry the phosphoserine modification. The segment covering 1075–1095 (KRQEKITEAKSKDKSQMEEEK) has biased composition (basic and acidic residues). 3 positions are modified to phosphoserine: S1197, S1199, and S1200. The segment covering 1205-1216 (RENPGREFDTPL) has biased composition (basic and acidic residues).

In terms of assembly, interacts with DGKQ. It depends on Ca(2+) as a cofactor. Palmitoylated. Palmitoylation at Cys-17 by ZDHHC21 regulates the signaling activity of PLCB1 and the function of the endothelial barrier. Palmitoylation by ZDHHC21 is stimulated by inflammation.

The protein localises to the nucleus membrane. It localises to the cytoplasm. The catalysed reaction is a 1,2-diacyl-sn-glycero-3-phospho-(1D-myo-inositol-4,5-bisphosphate) + H2O = 1D-myo-inositol 1,4,5-trisphosphate + a 1,2-diacyl-sn-glycerol + H(+). It catalyses the reaction a 1,2-diacyl-sn-glycero-3-phospho-(1D-myo-inositol) + H2O = 1D-myo-inositol 1-phosphate + a 1,2-diacyl-sn-glycerol + H(+). In terms of biological role, catalyzes the hydrolysis of 1-phosphatidylinositol 4,5-bisphosphate into diacylglycerol (DAG) and inositol 1,4,5-trisphosphate (IP3) and mediates intracellular signaling downstream of G protein-coupled receptors. Regulates the function of the endothelial barrier. This chain is 1-phosphatidylinositol 4,5-bisphosphate phosphodiesterase beta-1, found in Mus musculus (Mouse).